The chain runs to 311 residues: Heme A synthase (311 aa).

At 1–6 (MQRFIK) the chain is on the cytoplasmic side. A helical membrane pass occupies residues 7 to 27 (WLAVITSLDLLIVLLGGALVT). At 28-62 (KTGSGQGCGKSWPLCNGEFVPSNLSMETIIELSHR) the chain is on the extracellular side. Cys-35 and Cys-42 are joined by a disulfide. Glu-58 is a catalytic residue. His-61 contacts heme o. The chain crosses the membrane as a helical span at residues 63-83 (LTSGSAGILVTLLCILSWKYY). Residues 84-91 (KHVRETKT) lie on the Cytoplasmic side of the membrane. The helical transmembrane segment at 92-112 (LAILSFVFLVAQALMGAAAVV) threads the bilayer. The Extracellular segment spans residues 113–121 (WGQMPAVLA). A helical membrane pass occupies residues 122-142 (IHFGISLISFASVILLTCLIF). His-123 lines the heme o pocket. The Cytoplasmic segment spans residues 143 to 159 (EIDQKFDARSLIMDKKM). Residues 160-180 (KFHIYGVTIYSYIVVYTGALV) traverse the membrane as a helical segment. The Extracellular portion of the chain corresponds to 181-211 (RHERASLACPDFPLCSKNRPMPTQLHEWVQM). Cys-189 and Cys-195 are joined by a disulfide. The helical transmembrane segment at 212-232 (GHRVAAMLIFAWILYAMILAI) threads the bilayer. Residue His-213 participates in heme b binding. At 233–243 (RHYKQQPVVYW) the chain is on the cytoplasmic side. The chain crosses the membrane as a helical span at residues 244–264 (GWIISFILVTLQAIVGILVVF). The Extracellular portion of the chain corresponds to 265–271 (TNASLSM). A helical membrane pass occupies residues 272 to 292 (ALLHSLFISCLFAVLCYLVML). His-275 contacts heme b. Residues 293–311 (GTRSKVNAKEAASISKQTK) are Cytoplasmic-facing.

This sequence belongs to the COX15/CtaA family. Type 1 subfamily. As to quaternary structure, interacts with CtaB. Requires heme b as cofactor.

It is found in the cell membrane. It carries out the reaction Fe(II)-heme o + 2 A + H2O = Fe(II)-heme a + 2 AH2. Its pathway is porphyrin-containing compound metabolism; heme A biosynthesis; heme A from heme O: step 1/1. Functionally, catalyzes the conversion of heme O to heme A by two successive hydroxylations of the methyl group at C8. The first hydroxylation forms heme I, the second hydroxylation results in an unstable dihydroxymethyl group, which spontaneously dehydrates, resulting in the formyl group of heme A. This Bacillus cereus (strain AH187) protein is Heme A synthase.